The sequence spans 993 residues: Importin subunit beta-5 (993 aa).

Positions 24–100 constitute an Importin N-terminal domain; that stretch reads AELGLRDLEK…RETLLHLLVS (77 aa).

Its subcellular location is the nucleus. Required for nuclear protein import and mediates docking of import substrate to distinct nucleoporins. Serves a receptor for nuclear localization signals. Mediates the nuclear import of TATA-binding protein (TBP) and of histones H2A and H2B. The polypeptide is Importin subunit beta-5 (kap114) (Schizosaccharomyces pombe (strain 972 / ATCC 24843) (Fission yeast)).